The chain runs to 586 residues: UvrABC system protein C (586 aa).

Residues 17–94 (HKPGCYLWKD…IKQYKPRFNL (78 aa)) form the GIY-YIG domain. In terms of domain architecture, UVR spans 201-236 (EQVLNHLQQQEIKASEQQNFEAARHFLDLQKAVLEL).

Belongs to the UvrC family. As to quaternary structure, interacts with UvrB in an incision complex.

Its subcellular location is the cytoplasm. Functionally, the UvrABC repair system catalyzes the recognition and processing of DNA lesions. UvrC both incises the 5' and 3' sides of the lesion. The N-terminal half is responsible for the 3' incision and the C-terminal half is responsible for the 5' incision. This Mycoplasma pneumoniae (strain ATCC 29342 / M129 / Subtype 1) (Mycoplasmoides pneumoniae) protein is UvrABC system protein C.